A 167-amino-acid chain; its full sequence is MIPYQEWHSQLQSLYDSQIFHNWALCQDVHLNDEKDGLLLRLIPTRQLQKNTERIENKLLNHIELYLTYSKVYNEPLLLLRIWEEKSIDGIPMTKLMLPTDIESLLDVQGKFQLGLDTIINLEGSVWYSFHPCDTSCIVGDQAEFMSTYLRRWVSIFIFSWLGYEDS.

Cys133 serves as the catalytic Glycyl thioester intermediate.

This sequence belongs to the ATG10 family. Forms homooligomers. Interacts with ATG7 and ATG12.

It is found in the preautophagosomal structure membrane. E2-like enzyme required for the cytoplasm to vacuole transport (Cvt), autophagy and nucleophagy. Acts as an E2-like enzyme that catalyzes the conjugation of ATG12 to ATG5. ATG12 conjugation to ATG5 is required for proper localization of ATG8 to the preautophagosomal structure (PAS). Likely serves as an ATG5-recognition molecule. This is Ubiquitin-like-conjugating enzyme ATG10 (ATG10) from Saccharomyces cerevisiae (strain ATCC 204508 / S288c) (Baker's yeast).